The chain runs to 297 residues: Transcription factor LRL3 (297 aa).

The disordered stretch occupies residues 59–109 (PDQFHHPQESGGPTMGSQEGLQPQGTVSTTSAPVVRQKPRVRARRGQATDP). The segment covering 73 to 90 (MGSQEGLQPQGTVSTTSA) has biased composition (polar residues). Residues 105–118 (QATDPHSIAERLRR) are basic motif; degenerate. The bHLH domain occupies 105–154 (QATDPHSIAERLRRERIAERMKSLQELVPNTNKTDKASMLDEIIEYVRFL). Residues 119 to 154 (ERIAERMKSLQELVPNTNKTDKASMLDEIIEYVRFL) are helix-loop-helix motif.

In terms of assembly, homodimer. Expressed in trichomes of the root maturation zone. Detected constitutively in flowers.

It localises to the nucleus. Its function is as follows. Transcription factor that regulates the development of root hairs. Does not seem to be involved in the regulation of sperm cell development. The protein is Transcription factor LRL3 of Arabidopsis thaliana (Mouse-ear cress).